The sequence spans 307 residues: Elongation factor Ts, mitochondrial (307 aa).

The transit peptide at 1-19 (MIFTRLTRFVGHGTGLRLY) directs the protein to the mitochondrion.

The protein belongs to the EF-Ts family.

Its subcellular location is the mitochondrion. In terms of biological role, associates with the EF-Tu.GDP complex and induces the exchange of GDP to GTP. It remains bound to the aminoacyl-tRNA.EF-Tu.GTP complex up to the GTP hydrolysis stage on the ribosome. The polypeptide is Elongation factor Ts, mitochondrial (Aedes aegypti (Yellowfever mosquito)).